The chain runs to 534 residues: NEDD8-activating enzyme E1 regulatory subunit (534 aa).

Ala2 is modified (N-acetylalanine). An N6-acetyllysine mark is found at Lys6 and Lys341. Residues 331 to 344 (DMIADSNKYIKLQN) form an interaction with UBA3 region.

The protein belongs to the ubiquitin-activating E1 family. ULA1 subfamily. In terms of assembly, heterodimer of UBA3 and NAE1. The complex binds NEDD8 and UBE2M. Binds APP and TP53BP2. Ubiquitinated by TRIP12, leading to its degradation by the proteasome. Expressed throughout the brain. In hippocampus, strongly expressed in granule cells and in the pyramidal cell layer. Strongly expressed in the piriform cortex. In the cerebellum, expressed only in Purkinje cells.

It is found in the cell membrane. The protein operates within protein modification; protein neddylation. With respect to regulation, binding of TP53BP2 to the regulatory subunit NAE1 decreases neddylation activity. Functionally, regulatory subunit of the dimeric UBA3-NAE1 E1 enzyme. E1 activates NEDD8 by first adenylating its C-terminal glycine residue with ATP, thereafter linking this residue to the side chain of the catalytic cysteine, yielding a NEDD8-UBA3 thioester and free AMP. E1 finally transfers NEDD8 to the catalytic cysteine of UBE2M. Necessary for cell cycle progression through the S-M checkpoint. Overexpression of NAE1 causes apoptosis through deregulation of NEDD8 conjugation. The covalent attachment of NEDD8 to target proteins is known as 'neddylation' and the process is involved in the regulation of cell growth, viability and development. This is NEDD8-activating enzyme E1 regulatory subunit (Nae1) from Rattus norvegicus (Rat).